An 860-amino-acid chain; its full sequence is DNA gyrase subunit A (860 aa).

In terms of domain architecture, Topo IIA-type catalytic spans 34 to 503; the sequence is LPDARDGLKP…EDGELIDTDL (470 aa). Catalysis depends on tyrosine 122, which acts as the O-(5'-phospho-DNA)-tyrosine intermediate. Residues 530 to 536 carry the GyrA-box motif; it reads QNRATRG.

This sequence belongs to the type II topoisomerase GyrA/ParC subunit family. Heterotetramer, composed of two GyrA and two GyrB chains. In the heterotetramer, GyrA contains the active site tyrosine that forms a transient covalent intermediate with DNA, while GyrB binds cofactors and catalyzes ATP hydrolysis.

The protein resides in the cytoplasm. It catalyses the reaction ATP-dependent breakage, passage and rejoining of double-stranded DNA.. A type II topoisomerase that negatively supercoils closed circular double-stranded (ds) DNA in an ATP-dependent manner to modulate DNA topology and maintain chromosomes in an underwound state. Negative supercoiling favors strand separation, and DNA replication, transcription, recombination and repair, all of which involve strand separation. Also able to catalyze the interconversion of other topological isomers of dsDNA rings, including catenanes and knotted rings. Type II topoisomerases break and join 2 DNA strands simultaneously in an ATP-dependent manner. The chain is DNA gyrase subunit A from Synechocystis sp. (strain ATCC 27184 / PCC 6803 / Kazusa).